Consider the following 282-residue polypeptide: MEMO1 family protein Msed_2139 (282 aa).

The protein belongs to the MEMO1 family.

This Metallosphaera sedula (strain ATCC 51363 / DSM 5348 / JCM 9185 / NBRC 15509 / TH2) protein is MEMO1 family protein Msed_2139.